The chain runs to 99 residues: Acylphosphatase-1 (99 aa).

Residue Ala-2 is modified to N-acetylalanine. Residues 9 to 99 (SVDYEIFGKV…LDYSDFQIVK (91 aa)) form the Acylphosphatase-like domain. Active-site residues include Arg-24 and Asn-42.

It belongs to the acylphosphatase family.

It carries out the reaction an acyl phosphate + H2O = a carboxylate + phosphate + H(+). The protein is Acylphosphatase-1 (Acyp1) of Mus musculus (Mouse).